The primary structure comprises 192 residues: Peptidyl-tRNA hydrolase (192 aa).

His17 lines the tRNA pocket. His22 serves as the catalytic Proton acceptor. 3 residues coordinate tRNA: Phe68, Asn70, and Asn116.

The protein belongs to the PTH family. In terms of assembly, monomer.

It is found in the cytoplasm. The catalysed reaction is an N-acyl-L-alpha-aminoacyl-tRNA + H2O = an N-acyl-L-amino acid + a tRNA + H(+). Its function is as follows. Hydrolyzes ribosome-free peptidyl-tRNAs (with 1 or more amino acids incorporated), which drop off the ribosome during protein synthesis, or as a result of ribosome stalling. Catalyzes the release of premature peptidyl moieties from peptidyl-tRNA molecules trapped in stalled 50S ribosomal subunits, and thus maintains levels of free tRNAs and 50S ribosomes. This Xylella fastidiosa (strain 9a5c) protein is Peptidyl-tRNA hydrolase.